The sequence spans 129 residues: Small ribosomal subunit protein uS11 (129 aa).

This sequence belongs to the universal ribosomal protein uS11 family. Part of the 30S ribosomal subunit. Interacts with proteins S7 and S18. Binds to IF-3.

In terms of biological role, located on the platform of the 30S subunit, it bridges several disparate RNA helices of the 16S rRNA. Forms part of the Shine-Dalgarno cleft in the 70S ribosome. This chain is Small ribosomal subunit protein uS11, found in Staphylococcus epidermidis (strain ATCC 12228 / FDA PCI 1200).